Here is a 188-residue protein sequence, read N- to C-terminus: Peptidyl-tRNA hydrolase (188 aa).

Tyrosine 14 contributes to the tRNA binding site. Histidine 19 acts as the Proton acceptor in catalysis. TRNA contacts are provided by tyrosine 64, asparagine 66, and asparagine 112.

It belongs to the PTH family. Monomer.

The protein localises to the cytoplasm. The enzyme catalyses an N-acyl-L-alpha-aminoacyl-tRNA + H2O = an N-acyl-L-amino acid + a tRNA + H(+). Its function is as follows. Hydrolyzes ribosome-free peptidyl-tRNAs (with 1 or more amino acids incorporated), which drop off the ribosome during protein synthesis, or as a result of ribosome stalling. Catalyzes the release of premature peptidyl moieties from peptidyl-tRNA molecules trapped in stalled 50S ribosomal subunits, and thus maintains levels of free tRNAs and 50S ribosomes. The protein is Peptidyl-tRNA hydrolase of Clostridium perfringens (strain SM101 / Type A).